A 79-amino-acid polypeptide reads, in one-letter code: CDC42 small effector protein 1 (79 aa).

Residues Cys-10 and Cys-11 are each lipidated (S-palmitoyl cysteine). Residues 30–43 (IGEPMNFVHLTHIG) enclose the CRIB domain. Positions 41-79 (HIGSGDMGASDGLPRAGGVQEQMRSKCGRDRQWSNSGVL) are disordered. A compositionally biased stretch (basic and acidic residues) spans 63-72 (MRSKCGRDRQ).

This sequence belongs to the CDC42SE/SPEC family.

It is found in the cytoplasm. The protein localises to the cytoskeleton. It localises to the cell membrane. Probably involved in the organization of the actin cytoskeleton by acting downstream of CDC42, inducing actin filament assembly. In Xenopus tropicalis (Western clawed frog), this protein is CDC42 small effector protein 1 (cdc42se1).